Consider the following 605-residue polypeptide: LysM domain receptor-like kinase 10 (605 aa).

Residues 1 to 20 (MFSLPALLIGACAFAAAAVA) form the signal peptide. Residues 21–245 (ASGDGCRAGC…GMGNSLSGGA (225 aa)) lie on the Extracellular side of the membrane. Disulfide bonds link C26–C89, C30–C161, and C87–C159. N44 carries an N-linked (GlcNAc...) asparagine glycan. Chitin-binding positions include 115–121 (GGDTYDA) and 142–148 (PPGRIPG). N-linked (GlcNAc...) asparagine glycosylation is found at N154 and N158. The LysM domain maps to 174-221 (LTYPLWDGETLESVAAQYGFSSPAEMELIRRYNPGMGGVSGKGIVFIP). A glycan (N-linked (GlcNAc...) asparagine) is linked at N226. Residues 246–266 (IAGIVIACIAIFIVAIWLIIM) traverse the membrane as a helical segment. The Cytoplasmic portion of the chain corresponds to 267–605 (FYRWQKFRKA…DLRDMDYHPF (339 aa)). S278 carries the phosphoserine modification. The Protein kinase domain maps to 317–591 (FSMEHKIGQG…RSVVVALMAL (275 aa)). Residues 323-331 (IGQGGFGSV) and K344 contribute to the ATP site. The active-site Proton acceptor is the D436.

Belongs to the protein kinase superfamily. Ser/Thr protein kinase family.

The protein localises to the cell membrane. It carries out the reaction L-seryl-[protein] + ATP = O-phospho-L-seryl-[protein] + ADP + H(+). It catalyses the reaction L-threonyl-[protein] + ATP = O-phospho-L-threonyl-[protein] + ADP + H(+). The chain is LysM domain receptor-like kinase 10 from Oryza sativa subsp. japonica (Rice).